The sequence spans 261 residues: MLTCNDKINPKTLLEEIMALRPWRKGPFEISQIKIDSEWDSSIKWDLVKNATLLKDKVVADVGCNNGYYLFKMLEHGPKSLVGFDPGVLVKKQFEFLAPFFDKEKKIIYESLGVEDLHEKYPNAFDVIFCLGVLYHRKSPLEALKALYHALKIKGELVLDTLIIDSPLDIALCPKKTYAKMKNVYFIPSVSALKGWCERVGFENFEILSVLKTTPKEQRKTDFILGQSLEDFLDETDHSKTLEGYDAPLRGYFKMLKPSKR.

Residues Lys-25, Trp-39, Lys-44, Gly-63, 114–115, Tyr-135, and Arg-250 contribute to the carboxy-S-adenosyl-L-methionine site; that span reads VE.

The protein belongs to the class I-like SAM-binding methyltransferase superfamily. CmoB family. In terms of assembly, homotetramer.

The catalysed reaction is carboxy-S-adenosyl-L-methionine + 5-hydroxyuridine(34) in tRNA = 5-carboxymethoxyuridine(34) in tRNA + S-adenosyl-L-homocysteine + H(+). Its function is as follows. Catalyzes carboxymethyl transfer from carboxy-S-adenosyl-L-methionine (Cx-SAM) to 5-hydroxyuridine (ho5U) to form 5-carboxymethoxyuridine (cmo5U) at position 34 in tRNAs. In Helicobacter pylori (strain HPAG1), this protein is tRNA U34 carboxymethyltransferase.